A 546-amino-acid chain; its full sequence is MILPADPIFSQLLLIARNSPDEVVIDDRNLHVQAGYSHLLHDAVQLAQQLRDSLSQGPSTVGSAFIGILAPTSYESTVASLAILAVGAAGASLEELAYTLKQCSATCVLVGSQHQQTKLATQLQEQTGILKLAIPVLSPGRPPIESYTLDEDSIPSDDLPAFLFFTSGTTGAPKGVLHARRYLYAKFSVQQSELTDELCLIYDSICWSTCFISVLLHILRGERVELHELDARYDLIWDRFRDCEITKIHFSPTSWYTMMKVFQERISKLPEPSVQAYIRGAQYIRTPITLGGILPVPVKQFWLNLRGGRPIKVIYGSTEAGLLTVADPEASASEEASIGSPAPNVTVKLSDGDSGELLVKAPTLLLQYLNSPELTASCFDSEGFYKTGDLVERQGKNFIFRGRYKADFFKFWDHKIPRLHVESCLSSLPYIEEAHILPVADARCDNRVAALVRLRQDHTCVTLQSIRKDLSTMLPVYQMPTLLRILGKGDEVPRTFSEKVAMKKTVERFFPRWNNDHFMDDSIEVLGIKEILQFDTTGPLELVELW.

Residues 166–174, 300–305, and R403 contribute to the ATP site; these read TSGTTGAPK and QFWLNL. Residues 412–414 and 482–484 each bind CoA; these read WDH and LLR. K499 serves as a coordination point for ATP.

This sequence belongs to the ATP-dependent AMP-binding enzyme family.

It participates in secondary metabolite biosynthesis. In terms of biological role, acyl-CoA ligase; part of the gene cluster that mediates the biosynthesis of oryzines, natural products with an unusual maleidride backbone. The two subunits of the fungal fatty acid synthase oryfasA and oryfasB probably form octenoic acid. This fatty acid is most likely activated by the acyl-CoA ligase oryP to give octenyl-CoA before the citrate synthase-like protein oryE catalyzes condensation with oxaloacetate to form tricarboxylic acid. The next steps of the pathways are conjectural, but a favorite possible route has been proposed, beginning with decarboxylation and concomitant dehydration by the decarboxylase oryM, followed by tautomerization, which may lead to the production of a diene intermediate. Reduction of this diene intermediate could give the known metabolite piliformic acid. On the pathway to oryzine B and oryzine A, however, hydroxylation of the diene by the alpha-ketoglutarate-dependent dioxygenase oryG and lactonisation by the lactonohydrolases oryH or oryL could give oryzine B directly. Finally, enoyl reduction by the dehydrogenase oryD would then convert oryzine B into oryzine A. The polypeptide is Acyl-CoA ligase oryP (Aspergillus oryzae (strain ATCC 42149 / RIB 40) (Yellow koji mold)).